The following is a 76-amino-acid chain: Small ribosomal subunit protein bS18 (76 aa).

Belongs to the bacterial ribosomal protein bS18 family. In terms of assembly, part of the 30S ribosomal subunit. Forms a tight heterodimer with protein bS6.

In terms of biological role, binds as a heterodimer with protein bS6 to the central domain of the 16S rRNA, where it helps stabilize the platform of the 30S subunit. In Desulfitobacterium hafniense (strain Y51), this protein is Small ribosomal subunit protein bS18.